The sequence spans 244 residues: Mitophagy receptor atg43 (244 aa).

The tract at residues 1–24 (MSSESKGIPIPRSDSNKTSDVSSW) is disordered. At 1 to 198 (MSSESKGIPI…LVALITLRDH (198 aa)) the chain is on the cytoplasmic side. Residues 28–31 (YELI) carry the atg8 interacting motif (AIM) motif. Positions 105–131 (SLSLLQSKEEDDSSNWETEDSESAVEE) are disordered. The segment covering 113–131 (EEDDSSNWETEDSESAVEE) has biased composition (acidic residues). Residues 165–184 (PPIPDLRFQQSYLQSIQRAN) are involved in MIM complex binding. Required for normal vegetative cell population growth but is dispensable for mitophagy. The chain crosses the membrane as a helical span at residues 199–215 (VLYPFLSGGMWVFVRHI). The Mitochondrial intermembrane portion of the chain corresponds to 216–244 (FQFLKLQEKGFHFGQSLRRNLGLFSTFKD).

In terms of assembly, interacts (via N-terminal atg8 interacting motif) with atg8; the interaction is direct. Interacts with the mitochondrial outer import machinery (MIM) complex subunits mim1 and mim2.

The protein localises to the mitochondrion outer membrane. In terms of biological role, mitophagy receptor that tethers atg8 to the mitochondrial outer membrane to promote selective autophagy. In Schizosaccharomyces pombe (strain 972 / ATCC 24843) (Fission yeast), this protein is Mitophagy receptor atg43.